A 586-amino-acid chain; its full sequence is MVTHRQRYREKVSQMVSWGHWFALFNILLSLVIGSRYLFIADWPTTLAGRIYSYVSIIGHFSFLVFATYLLILFPLTFIVGSQRLMRFLSVILATAGMTLLLIDSEVFTRFHLHLNPIVWQLVINPDENEMARDWQLMFISVPVILLLELVFATWSWQKLRSLTRRRRFARPLAAFLFIAFIASHVVYIWADANFYRPITMQRANLPLSYPMTARRFLEKHGLLDAQEYQRRLIEQGNPDAVSVQYPLSELRYRDMGTGQNVLLITVDGLNYSRFEKQMPALAGFAEQNISFTRHMSSGNTTDNGIFGLFYGISPSYMDGILSTRTPAALITALNQQGYQLGLFSSDGFTSPLYRQALLSDFSMPSVRTQSDEQTATQWINWLGRYAQEDNRWFSWVSFNGTNIDDSNQQAFARKYSRAAGNVDDQINRVLNALRDSGKLDNTVVIITAGRGIPLSEEEETFDWSHGHLQVPLVIHWPGTPAQRINALTDHTDLMTTLMQRLLHVSTPASEYSQGQDLFNPQRRHYWVTAADNDTLAITTPKKTLVLNNNGKYRTYNLRGERVKDEKPQLSLLLQVLTDEKRFIAN.

Residues 1 to 20 (MVTHRQRYREKVSQMVSWGH) lie on the Cytoplasmic side of the membrane. Residues 21–43 (WFALFNILLSLVIGSRYLFIADW) traverse the membrane as a helical segment. Residues 44-57 (PTTLAGRIYSYVSI) are Periplasmic-facing. Residues 58-80 (IGHFSFLVFATYLLILFPLTFIV) form a helical membrane-spanning segment. Topologically, residues 81 to 84 (GSQR) are cytoplasmic. A helical membrane pass occupies residues 85–103 (LMRFLSVILATAGMTLLLI). The Periplasmic segment spans residues 104–134 (DSEVFTRFHLHLNPIVWQLVINPDENEMARD). A helical transmembrane segment spans residues 135–157 (WQLMFISVPVILLLELVFATWSW). Residues 158 to 168 (QKLRSLTRRRR) are Cytoplasmic-facing. The chain crosses the membrane as a helical span at residues 169 to 191 (FARPLAAFLFIAFIASHVVYIWA). Over 192-586 (DANFYRPITM…LTDEKRFIAN (395 aa)) the chain is Periplasmic.

This sequence to H.influenzae HI_0842.

It is found in the cell inner membrane. This is Inner membrane protein YejM (yejM) from Escherichia coli O157:H7.